Here is a 352-residue protein sequence, read N- to C-terminus: Molybdenum import ATP-binding protein ModC (352 aa).

An ABC transporter domain is found at Met-1–Glu-229. Gly-31–Thr-38 serves as a coordination point for ATP. The Mop domain maps to Gln-289–Ala-352.

It belongs to the ABC transporter superfamily. Molybdate importer (TC 3.A.1.8) family. As to quaternary structure, the complex is composed of two ATP-binding proteins (ModC), two transmembrane proteins (ModB) and a solute-binding protein (ModA).

Its subcellular location is the cell inner membrane. It carries out the reaction molybdate(out) + ATP + H2O = molybdate(in) + ADP + phosphate + H(+). Its function is as follows. Part of the ABC transporter complex ModABC involved in molybdenum import. Responsible for energy coupling to the transport system. The sequence is that of Molybdenum import ATP-binding protein ModC from Escherichia coli O6:H1 (strain CFT073 / ATCC 700928 / UPEC).